The sequence spans 269 residues: E3 ubiquitin-protein ligase complex slx8-rfp subunit slx8 (269 aa).

Residues methionine 1–asparagine 10 are compositionally biased toward basic and acidic residues. Disordered stretches follow at residues methionine 1–alanine 75 and proline 166–proline 196. The segment covering proline 60–leucine 70 has biased composition (polar residues). Residues cysteine 206–arginine 247 form an RING-type zinc finger.

Part of an E3 ubiquitin complex including rfp1, rfp2 and slx8. Interacts with rfp1 and rfp2.

The protein localises to the nucleus. The catalysed reaction is S-ubiquitinyl-[E2 ubiquitin-conjugating enzyme]-L-cysteine + [acceptor protein]-L-lysine = [E2 ubiquitin-conjugating enzyme]-L-cysteine + N(6)-ubiquitinyl-[acceptor protein]-L-lysine.. It participates in protein modification; protein ubiquitination. In terms of biological role, mediates ubiquitination and subsequent desumoylation/degradation of sumoylated proteins and proteins containing SUMO-like domains. Acts as a critical suppressor of gross chromosomal rearrangements (GCRs) during normal cell cycle progression. Involved in stabilizing, restarting or resolving transiently stalled replication forks. Prevents accumulation of DNA damage during cell cycle progression. The polypeptide is E3 ubiquitin-protein ligase complex slx8-rfp subunit slx8 (slx8) (Schizosaccharomyces pombe (strain 972 / ATCC 24843) (Fission yeast)).